We begin with the raw amino-acid sequence, 394 residues long: Elongation factor Tu (394 aa).

The tr-type G domain maps to 10 to 204 (KPHVNVGTIG…ALDSYIPEPE (195 aa)). The interval 19–26 (GHVDHGKT) is G1. 19-26 (GHVDHGKT) lines the GTP pocket. A Mg(2+)-binding site is contributed by Thr-26. The segment at 60–64 (GITIN) is G2. The interval 81–84 (DCPG) is G3. Residues 81–85 (DCPGH) and 136–139 (NKCD) each bind GTP. The segment at 136–139 (NKCD) is G4. Residues 174–176 (SAL) form a G5 region.

The protein belongs to the TRAFAC class translation factor GTPase superfamily. Classic translation factor GTPase family. EF-Tu/EF-1A subfamily. Monomer.

It is found in the cytoplasm. It carries out the reaction GTP + H2O = GDP + phosphate + H(+). Functionally, GTP hydrolase that promotes the GTP-dependent binding of aminoacyl-tRNA to the A-site of ribosomes during protein biosynthesis. This chain is Elongation factor Tu, found in Shewanella sp. (strain ANA-3).